The chain runs to 248 residues: Ribonuclease 3 (248 aa).

Positions 6–136 constitute an RNase III domain; it reads LAYLQTLIGS…LIGAIYLDKG (131 aa). Glu49 serves as a coordination point for Mg(2+). Asp53 is an active-site residue. Mg(2+)-binding residues include Asp122 and Glu125. Residue Glu125 is part of the active site. The 69-residue stretch at 163–231 folds into the DRBM domain; sequence NYKSCLIEYS…AKEAMERIIA (69 aa).

Belongs to the ribonuclease III family. Homodimer. Mg(2+) is required as a cofactor.

It is found in the cytoplasm. The enzyme catalyses Endonucleolytic cleavage to 5'-phosphomonoester.. Its function is as follows. Digests double-stranded RNA. Involved in the processing of primary rRNA transcript to yield the immediate precursors to the large and small rRNAs (23S and 16S). Processes some mRNAs, and tRNAs when they are encoded in the rRNA operon. Processes pre-crRNA and tracrRNA of type II CRISPR loci if present in the organism. The sequence is that of Ribonuclease 3 from Chlorobium chlorochromatii (strain CaD3).